We begin with the raw amino-acid sequence, 149 residues long: Large ribosomal subunit protein eL8 (149 aa).

It belongs to the eukaryotic ribosomal protein eL8 family. In terms of assembly, part of the 50S ribosomal subunit. Probably part of the RNase P complex.

It localises to the cytoplasm. Multifunctional RNA-binding protein that recognizes the K-turn motif in ribosomal RNA, the RNA component of RNase P, box H/ACA, box C/D and box C'/D' sRNAs. This Pyrobaculum calidifontis (strain DSM 21063 / JCM 11548 / VA1) protein is Large ribosomal subunit protein eL8.